Reading from the N-terminus, the 367-residue chain is Glutamate 5-kinase (367 aa).

An ATP-binding site is contributed by Lys9. 3 residues coordinate substrate: Ser49, Asp136, and Asn148. ATP contacts are provided by residues 168–169 (TD) and 210–216 (TGGMKSK). Residues 276 to 350 (SGQIEVDAGA…GMQSQDIQVR (75 aa)) enclose the PUA domain.

It belongs to the glutamate 5-kinase family.

The protein resides in the cytoplasm. The catalysed reaction is L-glutamate + ATP = L-glutamyl 5-phosphate + ADP. The protein operates within amino-acid biosynthesis; L-proline biosynthesis; L-glutamate 5-semialdehyde from L-glutamate: step 1/2. Catalyzes the transfer of a phosphate group to glutamate to form L-glutamate 5-phosphate. The sequence is that of Glutamate 5-kinase from Bacillus cereus (strain ATCC 14579 / DSM 31 / CCUG 7414 / JCM 2152 / NBRC 15305 / NCIMB 9373 / NCTC 2599 / NRRL B-3711).